The following is a 620-amino-acid chain: GTP-binding protein At3g49725, chloroplastic (620 aa).

The transit peptide at 1–65 directs the protein to the chloroplast; the sequence is MSVTTSFGIW…SSFLARDRLR (65 aa). The tract at residues 57 to 100 is disordered; sequence SFLARDRLRSKTPSSSPFSSKRHTPKTSEIEEESTPKDSVLLNP. Residues 346–585 form the Hflx-type G domain; sequence GTIAVVGYTN…LIDDKMKEKK (240 aa). Residues 352 to 359, 377 to 381, 399 to 402, and 468 to 471 each bind GTP; these read GYTNAGKS, FATLD, DTVG, and NKID. Mg(2+)-binding residues include serine 359 and threonine 379. 2 stretches are compositionally biased toward acidic residues: residues 478 to 497 and 511 to 521; these read EEEK…EDEA and TVDEDQIQNGD. The tract at residues 478 to 521 is disordered; the sequence is EEEKYLDDGEGVGEEDEDEADLKAEETVDASEATVDEDQIQNGD. GTP is bound at residue 563 to 565; sequence SAL. The interval 597–620 is disordered; sequence LHKRKWRPPRNDDEEERLIPLDQR.

The protein belongs to the TRAFAC class OBG-HflX-like GTPase superfamily. HflX GTPase family. Mg(2+) is required as a cofactor.

The protein resides in the plastid. Its subcellular location is the chloroplast. The sequence is that of GTP-binding protein At3g49725, chloroplastic from Arabidopsis thaliana (Mouse-ear cress).